The primary structure comprises 696 residues: UvrABC system protein B (696 aa).

A Helicase ATP-binding domain is found at 46–433 (EGVEDGLSFQ…SGQTAEQVVR (388 aa)). Position 59–66 (59–66 (GVTGSGKT)) interacts with ATP. The short motif at 112–135 (YYDYYQPEAYVPQRDLFIEKDSSI) is the Beta-hairpin element. The 167-residue stretch at 450 to 616 (QVDDVLSEIT…GVVKRIKDII (167 aa)) folds into the Helicase C-terminal domain. Residues 647–682 (AKEIKRLEKQMADYAKNLEFEKAAQTRDQLALLRER) form the UVR domain.

It belongs to the UvrB family. Forms a heterotetramer with UvrA during the search for lesions. Interacts with UvrC in an incision complex.

It is found in the cytoplasm. In terms of biological role, the UvrABC repair system catalyzes the recognition and processing of DNA lesions. A damage recognition complex composed of 2 UvrA and 2 UvrB subunits scans DNA for abnormalities. Upon binding of the UvrA(2)B(2) complex to a putative damaged site, the DNA wraps around one UvrB monomer. DNA wrap is dependent on ATP binding by UvrB and probably causes local melting of the DNA helix, facilitating insertion of UvrB beta-hairpin between the DNA strands. Then UvrB probes one DNA strand for the presence of a lesion. If a lesion is found the UvrA subunits dissociate and the UvrB-DNA preincision complex is formed. This complex is subsequently bound by UvrC and the second UvrB is released. If no lesion is found, the DNA wraps around the other UvrB subunit that will check the other stand for damage. The sequence is that of UvrABC system protein B from Burkholderia mallei (strain ATCC 23344).